Here is an 882-residue protein sequence, read N- to C-terminus: Alanine--tRNA ligase (882 aa).

4 residues coordinate Zn(2+): His-574, His-578, Cys-682, and His-686. A disordered region spans residues 853 to 882 (GGRGGGKGALAQGGGLDPRKAREALPGLLP). Positions 854 to 868 (GRGGGKGALAQGGGL) are enriched in gly residues.

Belongs to the class-II aminoacyl-tRNA synthetase family. Zn(2+) serves as cofactor.

It is found in the cytoplasm. It catalyses the reaction tRNA(Ala) + L-alanine + ATP = L-alanyl-tRNA(Ala) + AMP + diphosphate. Functionally, catalyzes the attachment of alanine to tRNA(Ala) in a two-step reaction: alanine is first activated by ATP to form Ala-AMP and then transferred to the acceptor end of tRNA(Ala). Also edits incorrectly charged Ser-tRNA(Ala) and Gly-tRNA(Ala) via its editing domain. In Thermus thermophilus (strain ATCC 27634 / DSM 579 / HB8), this protein is Alanine--tRNA ligase.